The primary structure comprises 382 residues: Putative glutamate--cysteine ligase 2-1 (382 aa).

The protein belongs to the glutamate--cysteine ligase type 2 family. YbdK subfamily.

It carries out the reaction L-cysteine + L-glutamate + ATP = gamma-L-glutamyl-L-cysteine + ADP + phosphate + H(+). Functionally, ATP-dependent carboxylate-amine ligase which exhibits weak glutamate--cysteine ligase activity. The sequence is that of Putative glutamate--cysteine ligase 2-1 from Frankia alni (strain DSM 45986 / CECT 9034 / ACN14a).